The primary structure comprises 225 residues: PKHD-type hydroxylase YbiX (225 aa).

The Fe2OG dioxygenase domain maps to T78–S177. Residues H96, D98, and H158 each contribute to the Fe cation site. 2-oxoglutarate is bound at residue R168.

The cofactor is Fe(2+). Requires L-ascorbate as cofactor.

In Escherichia coli O81 (strain ED1a), this protein is PKHD-type hydroxylase YbiX.